The primary structure comprises 457 residues: Ig mu chain C region (457 aa).

Residues 1–105 are CH1; it reads SSSAPLLFPL…GEKEKKVELQ (105 aa). An intrachain disulfide couples C27 to C89. N-linked (GlcNAc...) asparagine glycosylation is found at N45 and N113. Residues 106–220 form a CH2 region; the sequence is VTPELPPNVS…KNVSSVCMGD (115 aa). A disulfide bridge links C136 with C200. N-linked (GlcNAc...) asparagine glycosylation is found at N212, N276, and N283. The interval 221–326 is CH3; that stretch reads DTSTGISVFL…PLKQSLSRPK (106 aa). Disulfide bonds link C248/C307 and C355/C417. A CH4 region spans residues 327–457; the sequence is DVANDPPSVF…VLSDTASTCY (131 aa). A glycan (N-linked (GlcNAc...) asparagine) is linked at N444.

This is Ig mu chain C region from Suncus murinus (Asian house shrew).